Here is a 205-residue protein sequence, read N- to C-terminus: MLLSPAAERSQGSLLSVIMEILKDQSHRELFGLELGSGTGQHVVHFAQEMPFVTWLPSDTKEESRNSIRAYIEATKAKTVLEPVHLDASEPWDKWAGLPQNSCDIILAINLLQYTPFSTAEGVFKGSGQILKQNGLLMTYGPYAINGTITPICNEQLDETLRQMNPEWGLPDIDVLRQLAFSNGMRMERMIEMPESNKCLVFRKL.

This sequence belongs to the UPF0585 family.

This is Methyltransferase-like 26 B from Danio rerio (Zebrafish).